The primary structure comprises 383 residues: Queuine tRNA-ribosyltransferase (383 aa).

The active-site Proton acceptor is Asp90. Residues Asp90 to Phe94, Asp144, Gln193, and Gly227 contribute to the substrate site. The tract at residues Gly258–Asp264 is RNA binding. Residue Asp277 is the Nucleophile of the active site. The tract at residues Thr282–Arg286 is RNA binding; important for wobble base 34 recognition. Zn(2+) contacts are provided by Cys315, Cys317, Cys320, and His346.

This sequence belongs to the queuine tRNA-ribosyltransferase family. Homodimer. Within each dimer, one monomer is responsible for RNA recognition and catalysis, while the other monomer binds to the replacement base PreQ1. Zn(2+) is required as a cofactor.

The catalysed reaction is 7-aminomethyl-7-carbaguanine + guanosine(34) in tRNA = 7-aminomethyl-7-carbaguanosine(34) in tRNA + guanine. The protein operates within tRNA modification; tRNA-queuosine biosynthesis. Catalyzes the base-exchange of a guanine (G) residue with the queuine precursor 7-aminomethyl-7-deazaguanine (PreQ1) at position 34 (anticodon wobble position) in tRNAs with GU(N) anticodons (tRNA-Asp, -Asn, -His and -Tyr). Catalysis occurs through a double-displacement mechanism. The nucleophile active site attacks the C1' of nucleotide 34 to detach the guanine base from the RNA, forming a covalent enzyme-RNA intermediate. The proton acceptor active site deprotonates the incoming PreQ1, allowing a nucleophilic attack on the C1' of the ribose to form the product. After dissociation, two additional enzymatic reactions on the tRNA convert PreQ1 to queuine (Q), resulting in the hypermodified nucleoside queuosine (7-(((4,5-cis-dihydroxy-2-cyclopenten-1-yl)amino)methyl)-7-deazaguanosine). In Ralstonia nicotianae (strain ATCC BAA-1114 / GMI1000) (Ralstonia solanacearum), this protein is Queuine tRNA-ribosyltransferase.